The following is a 747-amino-acid chain: Catalase-peroxidase (747 aa).

The signal sequence occupies residues 1-27 (MRKFSVSKVALLAATMAPALLPAAARA). Residues 116–238 (WHSAGTYRTA…LAAVQMGLIY (123 aa)) constitute a cross-link (tryptophyl-tyrosyl-methioninium (Trp-Tyr) (with M-264)). Histidine 117 functions as the Proton acceptor in the catalytic mechanism. Positions 238–264 (YVNPEGPNGNPDPLLAAKDIRETFGRM) form a cross-link, tryptophyl-tyrosyl-methioninium (Tyr-Met) (with W-116). Histidine 279 lines the heme b pocket.

Belongs to the peroxidase family. Peroxidase/catalase subfamily. As to quaternary structure, homodimer or homotetramer. Heme b serves as cofactor. Formation of the three residue Trp-Tyr-Met cross-link is important for the catalase, but not the peroxidase activity of the enzyme.

The catalysed reaction is H2O2 + AH2 = A + 2 H2O. It catalyses the reaction 2 H2O2 = O2 + 2 H2O. In terms of biological role, bifunctional enzyme with both catalase and broad-spectrum peroxidase activity. This Novosphingobium aromaticivorans (strain ATCC 700278 / DSM 12444 / CCUG 56034 / CIP 105152 / NBRC 16084 / F199) protein is Catalase-peroxidase.